Consider the following 698-residue polypeptide: Elongation factor G 1 (698 aa).

Residues 8–290 (ERYRNIGIVA…AVVDFLPAPI (283 aa)) enclose the tr-type G domain. Residues 17-24 (AHVDAGKT), 88-92 (DTPGH), and 142-145 (NKMD) each bind GTP.

It belongs to the TRAFAC class translation factor GTPase superfamily. Classic translation factor GTPase family. EF-G/EF-2 subfamily.

Its subcellular location is the cytoplasm. Catalyzes the GTP-dependent ribosomal translocation step during translation elongation. During this step, the ribosome changes from the pre-translocational (PRE) to the post-translocational (POST) state as the newly formed A-site-bound peptidyl-tRNA and P-site-bound deacylated tRNA move to the P and E sites, respectively. Catalyzes the coordinated movement of the two tRNA molecules, the mRNA and conformational changes in the ribosome. This Shewanella frigidimarina (strain NCIMB 400) protein is Elongation factor G 1.